A 550-amino-acid chain; its full sequence is Probable acyl-activating enzyme 9 (550 aa).

It belongs to the ATP-dependent AMP-binding enzyme family. Expressed in leaves, flowers and developing seeds.

Functionally, may act as an acid--thiol ligase that activates carboxylic acids by forming acyl-CoAs. This is Probable acyl-activating enzyme 9 (AEE9) from Arabidopsis thaliana (Mouse-ear cress).